We begin with the raw amino-acid sequence, 533 residues long: Inositol-3-phosphate synthase (533 aa).

Phosphothreonine is present on threonine 48. NAD(+) is bound by residues glycine 74, glycine 75, asparagine 76, asparagine 77, and aspartate 148. Phosphoserine occurs at positions 177 and 184. 17 residues coordinate NAD(+): serine 184, isoleucine 185, glutamine 195, aspartate 196, arginine 198, threonine 244, alanine 245, asparagine 246, threonine 247, glycine 295, serine 296, aspartate 320, leucine 321, serine 323, asparagine 354, asparagine 355, and aspartate 356. Phosphoserine is present on serine 296. Residue serine 368 is modified to Phosphoserine. Lysine 369 is an NAD(+) binding site. At serine 374 the chain carries Phosphoserine. Positions 409, 410, 438, and 439 each coordinate NAD(+).

The protein belongs to the myo-inositol 1-phosphate synthase family. Homotetramer. The cofactor is NAD(+). Post-translationally, phosphorylation at Ser-184 and Ser-374 is associated with a decrease in activity. Increasingly phosphorylated in presence of valproate.

It is found in the cytoplasm. The catalysed reaction is D-glucose 6-phosphate = 1D-myo-inositol 3-phosphate. It functions in the pathway polyol metabolism; myo-inositol biosynthesis; myo-inositol from D-glucose 6-phosphate: step 1/2. With respect to regulation, competitively inhibited by myo-2-inosose 1-phosphate, which is also an intermediate in the catalytic reaction. Competitively inhibited by 2-deoxy-myo-inositol 1-phosphate (dMIP), 1-deoxy-1-(phosphonomethyl)-myo-2-inosose (DPMI), dihydroxyacetone phosphate (DHAP), 6-deoxy-D-glucose 6-(E)-vinylhomophosphonate, 6-deoxy-D-glucitol 6-(E)-vinylhomophosphonate, 2,6-dideoxy-D-glucose 6-(E)-vinylhomophosphonate and 2,6-dideoxy-D-glucitol 6-(E)-vinylhomophosphonate. Inhibited by 2-deoxyglucitol 6-phosphate (dgtolP). Its function is as follows. Key enzyme in myo-inositol biosynthesis pathway that catalyzes the conversion of glucose 6-phosphate to 1-myo-inositol 1-phosphate in a NAD-dependent manner. Rate-limiting enzyme in the synthesis of all inositol-containing compounds. The polypeptide is Inositol-3-phosphate synthase (INO1) (Saccharomyces cerevisiae (strain ATCC 204508 / S288c) (Baker's yeast)).